Here is a 373-residue protein sequence, read N- to C-terminus: Phosphoserine aminotransferase (373 aa).

R47 is an L-glutamate binding site. Residues 81 to 82 (AR), W113, T164, D185, and Q208 each bind pyridoxal 5'-phosphate. The residue at position 209 (K209) is an N6-(pyridoxal phosphate)lysine. Residue 250-251 (NT) participates in pyridoxal 5'-phosphate binding.

It belongs to the class-V pyridoxal-phosphate-dependent aminotransferase family. SerC subfamily. In terms of assembly, homodimer. It depends on pyridoxal 5'-phosphate as a cofactor.

It is found in the cytoplasm. It catalyses the reaction O-phospho-L-serine + 2-oxoglutarate = 3-phosphooxypyruvate + L-glutamate. The enzyme catalyses 4-(phosphooxy)-L-threonine + 2-oxoglutarate = (R)-3-hydroxy-2-oxo-4-phosphooxybutanoate + L-glutamate. It functions in the pathway amino-acid biosynthesis; L-serine biosynthesis; L-serine from 3-phospho-D-glycerate: step 2/3. The protein operates within cofactor biosynthesis; pyridoxine 5'-phosphate biosynthesis; pyridoxine 5'-phosphate from D-erythrose 4-phosphate: step 3/5. Catalyzes the reversible conversion of 3-phosphohydroxypyruvate to phosphoserine and of 3-hydroxy-2-oxo-4-phosphonooxybutanoate to phosphohydroxythreonine. The polypeptide is Phosphoserine aminotransferase (Buchnera aphidicola subsp. Baizongia pistaciae (strain Bp)).